The chain runs to 154 residues: Myoglobin (154 aa).

A Globin domain is found at 2–148 (GLSDGEWQLV…FRNDMAAKYK (147 aa)). The residue at position 4 (serine 4) is a Phosphoserine. Residue histidine 65 coordinates nitrite. An O2-binding site is contributed by histidine 65. A Phosphothreonine modification is found at threonine 68. Histidine 94 lines the heme b pocket.

This sequence belongs to the globin family. Monomeric.

It localises to the cytoplasm. The protein resides in the sarcoplasm. It carries out the reaction Fe(III)-heme b-[protein] + nitric oxide + H2O = Fe(II)-heme b-[protein] + nitrite + 2 H(+). The enzyme catalyses H2O2 + AH2 = A + 2 H2O. In terms of biological role, monomeric heme protein which primary function is to store oxygen and facilitate its diffusion within muscle tissues. Reversibly binds oxygen through a pentacoordinated heme iron and enables its timely and efficient release as needed during periods of heightened demand. Depending on the oxidative conditions of tissues and cells, and in addition to its ability to bind oxygen, it also has a nitrite reductase activity whereby it regulates the production of bioactive nitric oxide. Under stress conditions, like hypoxia and anoxia, it also protects cells against reactive oxygen species thanks to its pseudoperoxidase activity. The chain is Myoglobin (MB) from Erythrocebus patas (Red guenon).